A 380-amino-acid polypeptide reads, in one-letter code: Sterol 24-C-methyltransferase ERG6B (380 aa).

It belongs to the class I-like SAM-binding methyltransferase superfamily. Erg6/SMT family.

It catalyses the reaction lanosterol + S-adenosyl-L-methionine = eburicol + S-adenosyl-L-homocysteine + H(+). It participates in steroid metabolism; ergosterol biosynthesis. Sterol 24-C-methyltransferase; part of the third module of ergosterol biosynthesis pathway that includes the late steps of the pathway. ERG6A and ERG6B methylate lanosterol at C-24 to produce eburicol. The third module or late pathway involves the ergosterol synthesis itself through consecutive reactions that mainly occur in the endoplasmic reticulum (ER) membrane. Firstly, the squalene synthase ERG9 catalyzes the condensation of 2 farnesyl pyrophosphate moieties to form squalene, which is the precursor of all steroids. Squalene synthase is crucial for balancing the incorporation of farnesyl diphosphate (FPP) into sterol and nonsterol isoprene synthesis. Secondly, squalene is converted into lanosterol by the consecutive action of the squalene epoxidase ERG1 and the lanosterol synthase ERG7. Then, the delta(24)-sterol C-methyltransferase ERG6 methylates lanosterol at C-24 to produce eburicol. Eburicol is the substrate of the sterol 14-alpha demethylase encoded by CYP51A, CYP51B and CYP51C, to yield 4,4,24-trimethyl ergosta-8,14,24(28)-trienol. CYP51B encodes the enzyme primarily responsible for sterol 14-alpha-demethylation, and plays an essential role in ascospore formation. CYP51A encodes an additional sterol 14-alpha-demethylase, induced on ergosterol depletion and responsible for the intrinsic variation in azole sensitivity. The third CYP51 isoform, CYP51C, does not encode a sterol 14-alpha-demethylase, but is required for full virulence on host wheat ears. The C-14 reductase ERG24 then reduces the C14=C15 double bond which leads to 4,4-dimethylfecosterol. A sequence of further demethylations at C-4, involving the C-4 demethylation complex containing the C-4 methylsterol oxidases ERG25, the sterol-4-alpha-carboxylate 3-dehydrogenase ERG26 and the 3-keto-steroid reductase ERG27, leads to the production of fecosterol via 4-methylfecosterol. ERG28 has a role as a scaffold to help anchor ERG25, ERG26 and ERG27 to the endoplasmic reticulum. The C-8 sterol isomerase ERG2 then catalyzes the reaction which results in unsaturation at C-7 in the B ring of sterols and thus converts fecosterol to episterol. The sterol-C5-desaturases ERG3A and ERG3BB then catalyze the introduction of a C-5 double bond in the B ring to produce 5-dehydroepisterol. The C-22 sterol desaturases ERG5A and ERG5B further convert 5-dehydroepisterol into ergosta-5,7,22,24(28)-tetraen-3beta-ol by forming the C-22(23) double bond in the sterol side chain. Finally, ergosta-5,7,22,24(28)-tetraen-3beta-ol is substrate of the C-24(28) sterol reductase ERG4 to produce ergosterol. The chain is Sterol 24-C-methyltransferase ERG6B from Gibberella zeae (strain ATCC MYA-4620 / CBS 123657 / FGSC 9075 / NRRL 31084 / PH-1) (Wheat head blight fungus).